We begin with the raw amino-acid sequence, 235 residues long: MGQKVHPNGMRLGIIKSWNSIWFASKKEFSNYLDSDFKVRSYVKKKLIKASVSKVIIERLSKNIRVTIYTARPGIVIGKKGEDVEKLRIEIAKITGVPAQVNISEIRKPELDAKLVADNISSQLERRVMFRRAIKRSVQNAMRQGAKGIKIEVSGRLGGVEIARREWYREGRVPLHTLRANIEYNTSEAHTTYGIIGVKVWIFKGEILDGMLVVSNKKDKKPFISVKKVSQKYRK.

The KH type-2 domain maps to Val-39 to Arg-107.

This sequence belongs to the universal ribosomal protein uS3 family. As to quaternary structure, part of the 30S ribosomal subunit. Forms a tight complex with proteins S10 and S14.

In terms of biological role, binds the lower part of the 30S subunit head. Binds mRNA in the 70S ribosome, positioning it for translation. The polypeptide is Small ribosomal subunit protein uS3 (Buchnera aphidicola subsp. Cinara cedri (strain Cc)).